Consider the following 512-residue polypeptide: Maturase K (512 aa).

It belongs to the intron maturase 2 family. MatK subfamily.

It is found in the plastid. Its subcellular location is the chloroplast. In terms of biological role, usually encoded in the trnK tRNA gene intron. Probably assists in splicing its own and other chloroplast group II introns. This is Maturase K from Wolffiella gladiata (Florida mud-midget).